The sequence spans 149 residues: Ribose-5-phosphate isomerase B (149 aa).

9–10 (DH) is a binding site for D-ribulose 5-phosphate. Cys66 functions as the Proton acceptor in the catalytic mechanism. 67–71 (GTGVG) lines the D-ribulose 5-phosphate pocket. The Proton donor role is filled by His99. Residues Asn100, Arg110, Arg133, and Arg137 each coordinate D-ribulose 5-phosphate.

Belongs to the LacAB/RpiB family. As to quaternary structure, homodimer, and homotetramer.

It carries out the reaction aldehydo-D-ribose 5-phosphate = D-ribulose 5-phosphate. The enzyme catalyses D-allose 6-phosphate = D-allulose 6-phosphate. The protein operates within carbohydrate degradation; pentose phosphate pathway; D-ribose 5-phosphate from D-ribulose 5-phosphate (non-oxidative stage): step 1/1. Inhibited by iodoacetate and glucose 6-phosphate. Its function is as follows. Catalyzes the interconversion of ribulose-5-P and ribose-5-P. It probably also has activity on D-allose 6-phosphate. The sequence is that of Ribose-5-phosphate isomerase B from Escherichia coli (strain K12).